The following is a 422-amino-acid chain: Protein phosphatase methylesterase 1 (422 aa).

The segment at 1-27 (MSDMFRKSVLNKLPHLPPTRAPWADES) is disordered. Catalysis depends on residues Ser-207, Asp-234, and His-371.

The protein belongs to the AB hydrolase superfamily.

It catalyses the reaction [phosphatase 2A protein]-C-terminal L-leucine methyl ester + H2O = [phosphatase 2A protein]-C-terminal L-leucine + methanol + H(+). In terms of biological role, demethylates proteins that have been reversibly carboxymethylated. Demethylates the phosphatase PP2A catalytic subunit. The protein is Protein phosphatase methylesterase 1 (PPE1) of Cryptococcus neoformans var. neoformans serotype D (strain B-3501A) (Filobasidiella neoformans).